We begin with the raw amino-acid sequence, 277 residues long: Large ribosomal subunit protein uL2 (277 aa).

Residues 222–277 are disordered; the sequence is GSVMNPNDHPHGGGEGKSPVGHPGPLTPWGKPALGLKTRKNKKYSDKFIIKRKNKK.

Belongs to the universal ribosomal protein uL2 family. As to quaternary structure, part of the 50S ribosomal subunit. Forms a bridge to the 30S subunit in the 70S ribosome.

One of the primary rRNA binding proteins. Required for association of the 30S and 50S subunits to form the 70S ribosome, for tRNA binding and peptide bond formation. It has been suggested to have peptidyltransferase activity; this is somewhat controversial. Makes several contacts with the 16S rRNA in the 70S ribosome. This chain is Large ribosomal subunit protein uL2, found in Clostridium kluyveri (strain NBRC 12016).